The chain runs to 793 residues: Short transient receptor potential channel 1 (793 aa).

The tract at residues 1–30 (MMAALYPSTDLSGVSSSSLPSSPSSSSPNE) is disordered. Residues 1 to 345 (MMAALYPSTD…FGQMSGYRRK (345 aa)) are Cytoplasmic-facing. Positions 15-28 (SSSSLPSSPSSSSP) are enriched in low complexity. 4 ANK repeats span residues 46–75 (LNEK…SGDL), 83–109 (LGRN…YGCQ), 111–156 (ADAL…EYST), and 158–180 (MDVA…MLLK). Zn(2+) contacts are provided by His-189, Cys-193, Cys-195, and Cys-198. The discontinuously helical intramembrane region spans 346–379 (PTCKKIMTVLTVGIFWPVLSLCYLIAPKSQFGRI). Residues 380 to 386 (IHTPFMK) are Cytoplasmic-facing. The helical transmembrane segment at 387 to 404 (FIIHGASYFTFLLLLNLY) threads the bilayer. Residues 405 to 422 (SLVYNEDKKNTMGPALER) are Extracellular-facing. The chain crosses the membrane as a helical span at residues 423-439 (IDYLLILWIIGMIWSDI). The Cytoplasmic portion of the chain corresponds to 440–455 (KRLWYEGLEDFLEESR). Residues 456–475 (NQLSFVMNSLYLATFALKVV) traverse the membrane as a helical segment. Residues 476 to 496 (AHNKFHDFADRKDWDAFHPTL) lie on the Extracellular side of the membrane. A helical membrane pass occupies residues 497 to 517 (VAEGLFAFANVLSYLRLFFMY). The Cytoplasmic segment spans residues 518-536 (TTSSILGPLQISMGQMLQD). Residues 537–558 (FGKFLGMFLLVLFSFTIGLTQL) form a helical membrane-spanning segment. Residues 559-623 (YDKGYTSKEQ…GEELQSFVGA (65 aa)) are Extracellular-facing. Cys-571 and Cys-576 are joined by a disulfide. A helical membrane pass occupies residues 624–644 (VIVGTYNVVVVIVLTKLLVAM). Topologically, residues 645-793 (LHKSFQLIAN…SKYAMFYPRN (149 aa)) are cytoplasmic.

Belongs to the transient receptor (TC 1.A.4) family. STrpC subfamily. TRPC1 sub-subfamily. As to quaternary structure, heterotetramer with TRPC4 and/or TRPC5. Forms a heteromeric ion channel with TRPC4, with a 1:3 TRPC1:TRPC4 stoichiometry. Unlike other TRP channel proteins, does not form a homomeric channel. Interacts with TRPC4AP. Interacts with ITPR3. Interacts with MX1 and RNF24. Interacts with FKBP4. Interacts with PLSCR1. Interacts with PKD2L2. Forms a heterotetramer with PKD2 with a 2:2 stoichiometry; has distinct channel properties separate from PKD2 or TRPC1 homomers alone. Post-translationally, activation of PRKCA induces phosphorylation of TRPC1 and subsequent Ca2+ entry into cells.

The protein resides in the cell membrane. The enzyme catalyses Ca(2+)(in) = Ca(2+)(out). The catalysed reaction is Na(+)(in) = Na(+)(out). It carries out the reaction Li(+)(in) = Li(+)(out). It catalyses the reaction Cs(+)(in) = Cs(+)(out). With respect to regulation, may be operated by a phosphatidylinositol second messenger system activated by receptor tyrosine kinases or G-protein coupled receptors. Also activated by intracellular calcium store depletion. Forms a receptor-activated non-selective calcium permeant cation channel. Forms a heteromeric ion channel with TRPC4 or TRPC5 that has reduced calcium permeability compared to the homomeric TRPC4 or TRPC5 channel. Also permeable to monovalent ions including sodium, lithium and cesium ions. In Mus musculus (Mouse), this protein is Short transient receptor potential channel 1 (Trpc1).